Here is a 1069-residue protein sequence, read N- to C-terminus: Kinesin-like protein vab-8 (1069 aa).

A Kinesin motor domain is found at 15 to 325; sequence PLRTIPKLRL…ACKIARTRVK (311 aa). Disordered regions lie at residues 328–374, 391–436, and 572–598; these read MGHG…LESG, SRTT…KSSP, and EQEE…RILS. 2 interaction with unc-51 regions span residues 331–517 and 517–719; these read GRKP…KSKY and YNLD…TVVD. Low complexity-rich tracts occupy residues 339–364 and 391–407; these read SSGT…GTPR and SRTT…TPTS. Residues 403 to 877 are interaction with unc-73; it reads STPTSIRPLH…SAERDRKTSK (475 aa). The stretch at 719–769 forms a coiled coil; the sequence is DWSQIERKKEREKDAMEEEKRKEVLRERRAKLKITELEIKRERNMIDKELD. The disordered stretch occupies residues 786-960; that stretch reads SLSPCRGGRT…RQSYSASSGY (175 aa). The segment covering 824 to 847 has biased composition (low complexity); it reads GGSLAKLSASGASGSGPPSSPSLG. Over residues 883–897 the composition is skewed to basic and acidic residues; sequence SSKERRSSGSKEELQ. Positions 906–928 are enriched in low complexity; that stretch reads TSPKTYGGPGTSSSGRGSSAPGS. Polar residues predominate over residues 938-960; the sequence is TEKTANGTMPRSKRQSYSASSGY. The stretch at 990–1027 forms a coiled coil; that stretch reads LVRQADEIRHRQWQLKKELEEAKRAIGQEEDAKMIANS.

This sequence belongs to the TRAFAC class myosin-kinesin ATPase superfamily. Kinesin family. KIF26 subfamily. As to quaternary structure, interacts with unc-51 and unc-73. In terms of processing, phosphorylated by unc-51.

It localises to the cytoplasm. The protein localises to the cytoskeleton. In terms of biological role, required for posterior migration of cells and axon growth cones during nervous system assembly. In PLM neuron, regulates innexin unc-9 gap junction turnover by suppressing unc-9 transport out of the gap junctions. This Caenorhabditis briggsae protein is Kinesin-like protein vab-8 (vab-8).